The primary structure comprises 225 residues: Ribose-5-phosphate isomerase A (225 aa).

Substrate-binding positions include Thr-26 to Thr-29, Asp-82 to Asp-85, and Lys-95 to Gly-98. Residue Glu-104 is the Proton acceptor of the active site. Residue Lys-122 participates in substrate binding.

It belongs to the ribose 5-phosphate isomerase family. In terms of assembly, homodimer.

The enzyme catalyses aldehydo-D-ribose 5-phosphate = D-ribulose 5-phosphate. Its pathway is carbohydrate degradation; pentose phosphate pathway; D-ribose 5-phosphate from D-ribulose 5-phosphate (non-oxidative stage): step 1/1. In terms of biological role, catalyzes the reversible conversion of ribose-5-phosphate to ribulose 5-phosphate. This chain is Ribose-5-phosphate isomerase A, found in Streptococcus mutans serotype c (strain ATCC 700610 / UA159).